The sequence spans 158 residues: Glutathione peroxidase homolog BsaA (158 aa).

C36 is an active-site residue.

Belongs to the glutathione peroxidase family.

The chain is Glutathione peroxidase homolog BsaA (bsaA) from Staphylococcus epidermidis (strain ATCC 12228 / FDA PCI 1200).